The sequence spans 405 residues: Secreted aspartic protease 8 (405 aa).

The first 25 residues, 1-25 (MVSIITFTKNVLVTLAFALLAQGLA), serve as a signal peptide directing secretion. The N-linked (GlcNAc...) asparagine glycan is linked to asparagine 50. The tract at residues 52–78 (TAHGQHHQSQQQQQQQQQQPAQKRGTV) is disordered. Residues 58-70 (HQSQQQQQQQQQQ) show a composition bias toward low complexity. The region spanning 89–392 (YAATITVGSN…DLDGNTISLA (304 aa)) is the Peptidase A1 domain. Aspartate 107 is an active-site residue. 107 to 109 (DTG) provides a ligand contact to pepstatin A. Cysteine 122 and cysteine 134 are disulfide-bonded. Aspartate 292 is an active-site residue. 292–296 (DSGTT) contributes to the pepstatin A binding site. A disulfide bridge connects residues cysteine 327 and cysteine 358.

The protein belongs to the peptidase A1 family. Monomer.

The protein localises to the secreted. The catalysed reaction is Preferential cleavage at the carboxyl of hydrophobic amino acids, but fails to cleave 15-Leu-|-Tyr-16, 16-Tyr-|-Leu-17 and 24-Phe-|-Phe-25 of insulin B chain. Activates trypsinogen, and degrades keratin.. In terms of biological role, secreted aspartic peptidases (SAPs) are a group of ten acidic hydrolases considered as key virulence factors. These enzymes supply the fungus with nutrient amino acids as well as are able to degrade the selected host's proteins involved in the immune defense. Moreover, acts toward human hemoglobin though limited proteolysis to generate a variety of antimicrobial hemocidins, enabling to compete with the other microorganisms of the same physiological niche using the microbicidal peptides generated from the host protein. Its function is as follows. Plays a key role in defense against host by cleaving histatin-5 (Hst 5), a peptide from human saliva that carries out fungicidal activity. The cleavage rate decreases in an order of SAP2 &gt; SAP9 &gt; SAP3 &gt; SAP7 &gt; SAP4 &gt; SAP1 &gt; SAP8. The hydrolysis of Hst 5 by SAP8 causes production of the DSHAKRHHGY, HHSHRGY and FHEKHHSHRGY peptides. The sequence is that of Secreted aspartic protease 8 from Candida albicans (Yeast).